The primary structure comprises 465 residues: Serine/threonine-protein kinase 38 (465 aa).

Alanine 2 bears the N-acetylalanine mark. Positions 62-87 (KRLRRSAHARKETEFLRLKRTRLGLE) are interaction with S100B. The residue at position 74 (threonine 74) is a Phosphothreonine. One can recognise a Protein kinase domain in the interval 89-382 (FESLKVIGRG…VEEIKNNSFF (294 aa)). ATP-binding positions include 95–103 (IGRGAFGEV) and lysine 118. Aspartate 212 serves as the catalytic Proton acceptor. The residue at position 264 (serine 264) is a Phosphoserine. Position 281 is a phosphoserine; by autocatalysis (serine 281). Residues 306–311 (WSLGVI) carry the UFM1-interacting motif (UFIM) motif. Residues 383-455 (EGVDWEHIRE…KRFEGLTARG (73 aa)) enclose the AGC-kinase C-terminal domain. At threonine 444 the chain carries Phosphothreonine; by STK24/MST3.

It belongs to the protein kinase superfamily. AGC Ser/Thr protein kinase family. Homodimeric S100B binds two molecules of STK38. Interacts with MOB1 and MOB2. Interacts with MAP3K1 and MAP3K2 (via the kinase domain). Forms a tripartite complex with MOBKL1B and STK3/MST2. Interacts with MICAL1; leading to inhibit the protein kinase activity by antagonizing activation by MST1/STK4. The cofactor is Mg(2+). In terms of processing, ISGylated. Post-translationally, phosphorylated by STK3/MST2 and this is enhanced by MOBKL1B.

The protein resides in the nucleus. It is found in the cytoplasm. Its subcellular location is the chromosome. It catalyses the reaction L-seryl-[protein] + ATP = O-phospho-L-seryl-[protein] + ADP + H(+). The catalysed reaction is L-threonyl-[protein] + ATP = O-phospho-L-threonyl-[protein] + ADP + H(+). Activated by binding of S100B which releases autoinhibitory N-lobe interactions, enabling ATP to bind and the autophosphorylation of Ser-281. Thr-444 then undergoes calcium-dependent phosphorylation by STK24/MST3. Interactions between phosphorylated Thr-444 and the N-lobe promote additional structural changes that complete the activation of the kinase. Autoinhibition is also released by the binding of MOB1/MOBKL1A and MOB2/HCCA2 to the N-terminal of STK38. Functionally, serine/threonine-protein kinase that acts as a negative regulator of MAP3K1/2 signaling. Converts MAP3K2 from its phosphorylated form to its non-phosphorylated form and inhibits autophosphorylation of MAP3K2. Acts as an ufmylation 'reader' in a kinase-independent manner: specifically recognizes and binds mono-ufmylated histone H4 in response to DNA damage, promoting the recruitment of SUV39H1 to the double-strand breaks, resulting in ATM activation. This is Serine/threonine-protein kinase 38 (STK38) from Bos taurus (Bovine).